A 784-amino-acid polypeptide reads, in one-letter code: ATP-dependent 6-phosphofructokinase, platelet type (784 aa).

At M1 the chain carries N-acetylmethionine. The interval 1–399 (MDADDSRAPK…NLNTYKRLAI (399 aa)) is N-terminal catalytic PFK domain 1. Phosphoserine occurs at positions 6, 12, and 21. Residues G34, 97–98 (RC), and 127–130 (GDGS) contribute to the ATP site. D128 is a Mg(2+) binding site. S142 carries the phosphoserine modification. Substrate contacts are provided by residues 173 to 175 (SID), R210, 217 to 219 (MGR), E273, R301, and 307 to 310 (HVQR). Residue D175 is the Proton acceptor of the active site. At S386 the chain carries Phosphoserine. N6-acetyllysine is present on K395. The tract at residues 400 to 411 (KLPDDQIPKTNC) is interdomain linker. The segment at 412 to 784 (NVAVINVGAP…QLEHVQPWSV (373 aa)) is C-terminal regulatory PFK domain 2. Beta-D-fructose 2,6-bisphosphate is bound at residue R481. An N6-acetyllysine modification is found at K486. Beta-D-fructose 2,6-bisphosphate-binding positions include 538 to 542 (TVSNN), R576, 583 to 585 (MGG), and E639. The O-linked (GlcNAc) serine glycan is linked to S540. Phosphotyrosine is present on Y651. Residues R665 and 671-674 (HMQQ) each bind beta-D-fructose 2,6-bisphosphate. Residue K688 is modified to N6-acetyllysine. Beta-D-fructose 2,6-bisphosphate is bound at residue R744. At S783 the chain carries Phosphoserine.

The protein belongs to the phosphofructokinase type A (PFKA) family. ATP-dependent PFK group I subfamily. Eukaryotic two domain clade 'E' sub-subfamily. Homo- and heterotetramers. Phosphofructokinase (PFK) enzyme functions as a tetramer composed of different combinations of 3 types of subunits, called PFKM (M), PFKL (L) and PFKP (P). The composition of the PFK tetramer differs according to the tissue type it is present in. The kinetic and regulatory properties of the tetrameric enzyme are dependent on the subunit composition, hence can vary across tissues. Interacts with ATG4B; promoting phosphorylation of ATG4B. Mg(2+) is required as a cofactor. Post-translationally, glcNAcylation decreases enzyme activity. In terms of processing, phosphorylation at Ser-386 promotes interaction with ATG4B.

The protein localises to the cytoplasm. The enzyme catalyses beta-D-fructose 6-phosphate + ATP = beta-D-fructose 1,6-bisphosphate + ADP + H(+). It participates in carbohydrate degradation; glycolysis; D-glyceraldehyde 3-phosphate and glycerone phosphate from D-glucose: step 3/4. Its activity is regulated as follows. Allosterically activated by ADP, AMP, or fructose 2,6-bisphosphate, and allosterically inhibited by ATP or citrate. In terms of biological role, catalyzes the phosphorylation of D-fructose 6-phosphate to fructose 1,6-bisphosphate by ATP, the first committing step of glycolysis. This Pongo abelii (Sumatran orangutan) protein is ATP-dependent 6-phosphofructokinase, platelet type (PFKP).